The following is a 171-amino-acid chain: Ferritin heavy chain (171 aa).

The residue at position 1 (methionine 1) is an N-acetylmethionine. Threonine 2 is subject to N-acetylthreonine; in Ferritin heavy chain, N-terminally processed. The region spanning 11 to 160 (QNYHQDSEAA…DHITNLRKMG (150 aa)) is the Ferritin-like diiron domain. Residues glutamate 28, glutamate 63, histidine 66, glutamate 108, and glutamine 142 each contribute to the Fe cation site.

It belongs to the ferritin family. As to quaternary structure, oligomer of 24 subunits. There are two types of subunits: L (light) chain and H (heavy) chain. The major chain can be light or heavy, depending on the species and tissue type. The functional molecule forms a roughly spherical shell with a diameter of 12 nm and contains a central cavity into which the insoluble mineral iron core is deposited. Interacts with NCOA4; NCOA4 promotes targeting of the iron-binding ferritin complex to autolysosomes following starvation or iron depletion.

It localises to the cytoplasm. It is found in the lysosome. The protein localises to the cytoplasmic vesicle. The protein resides in the autophagosome. It catalyses the reaction 4 Fe(2+) + O2 + 4 H(+) = 4 Fe(3+) + 2 H2O. Its function is as follows. Stores iron in a soluble, non-toxic, readily available form. Important for iron homeostasis. Has ferroxidase activity. Iron is taken up in the ferrous form and deposited as ferric hydroxides after oxidation. Also plays a role in delivery of iron to cells. Mediates iron uptake in capsule cells of the developing kidney. Delivery to lysosomes is mediated by the cargo receptor NCOA4 for autophagic degradation and release of iron. The chain is Ferritin heavy chain (FTH1) from Ovis aries (Sheep).